A 423-amino-acid chain; its full sequence is Gamma-glutamyl phosphate reductase (423 aa).

The protein belongs to the gamma-glutamyl phosphate reductase family.

It is found in the cytoplasm. It catalyses the reaction L-glutamate 5-semialdehyde + phosphate + NADP(+) = L-glutamyl 5-phosphate + NADPH + H(+). It functions in the pathway amino-acid biosynthesis; L-proline biosynthesis; L-glutamate 5-semialdehyde from L-glutamate: step 2/2. Its function is as follows. Catalyzes the NADPH-dependent reduction of L-glutamate 5-phosphate into L-glutamate 5-semialdehyde and phosphate. The product spontaneously undergoes cyclization to form 1-pyrroline-5-carboxylate. The chain is Gamma-glutamyl phosphate reductase from Pseudomonas putida (strain W619).